The primary structure comprises 444 residues: Chitinase-like protein Idgf5 (444 aa).

A signal peptide spans 1-26 (MMWIQKNPFLGLLLCSFLAFFQSTYA). The 416-residue stretch at 29 to 444 (GKLVCFYDAQ…PILRSIKFKL (416 aa)) folds into the GH18 domain. The cysteines at positions 33 and 60 are disulfide-linked. 2 N-linked (GlcNAc...) asparagine glycosylation sites follow: Asn-289 and Asn-311. A disulfide bridge links Cys-349 with Cys-429.

The protein belongs to the glycosyl hydrolase 18 family. IDGF subfamily. Post-translationally, glycosylated.

It is found in the secreted. Its function is as follows. Probably required to stimulate the proliferation, polarization and motility of imaginal disk cells. May act by stabilizing the binding of insulin-like peptides to its receptor through a simultaneous interaction with both molecules to form a multiprotein signaling complex. This Drosophila melanogaster (Fruit fly) protein is Chitinase-like protein Idgf5 (Idgf5).